The primary structure comprises 689 residues: Glycine--tRNA ligase beta subunit (689 aa).

Belongs to the class-II aminoacyl-tRNA synthetase family. Tetramer of two alpha and two beta subunits.

It is found in the cytoplasm. The enzyme catalyses tRNA(Gly) + glycine + ATP = glycyl-tRNA(Gly) + AMP + diphosphate. This is Glycine--tRNA ligase beta subunit from Escherichia coli O127:H6 (strain E2348/69 / EPEC).